The following is a 79-amino-acid chain: Calcium/calmodulin-dependent protein kinase II inhibitor 2 (79 aa).

The segment at 1 to 21 is disordered; sequence MSEILPYSEDKMGRFGADPEG. The tract at residues 43 to 69 is inhibitory domain; it reads KRPPKLGQIGRAKRVVIEDDRIDDVLK.

Belongs to the CAMK2N family. Interacts with CAMK2A and CAMK2B in the presence of Ca(2+)/calmodulin or after autophosphorylation.

Its subcellular location is the nucleus. The protein localises to the cytoplasm. The protein resides in the cytosol. It is found in the synapse. In terms of biological role, potent and specific cellular inhibitor of CaM-kinase II (CAMK2). Traps Ca(2+)/calmodulin on CAMK2. The protein is Calcium/calmodulin-dependent protein kinase II inhibitor 2 (CAMK2N2) of Bos taurus (Bovine).